The primary structure comprises 602 residues: Protein indeterminate-domain 5, chloroplastic (602 aa).

Low complexity-rich tracts occupy residues 1–10 (MAASSSSAAS) and 21–30 (HLLPPNSSAA). The transit peptide at 1 to 50 (MAASSSSAASFFGVRQDDQSHLLPPNSSAAAPPPPPPHHQAPLPPLEAPP) directs the protein to the chloroplast. The disordered stretch occupies residues 1 to 65 (MAASSSSAAS…NQPRTPNSDA (65 aa)). Pro residues predominate over residues 31–48 (APPPPPPHHQAPLPPLEA). Position 60 is a phosphothreonine (T60). S71 is modified (phosphoserine). 2 consecutive C2H2-type zinc fingers follow at residues 81 to 103 (FICE…RRGH) and 122 to 152 (YLCP…YRKH). The segment at 157 to 180 (WKCDKCSKRYAVQSDWKAHSKTCG) adopts a C2H2-type 2; degenerate zinc-finger fold. Residues C159, C162, H175, C179, C186, C188, H201, and C205 each coordinate Zn(2+). The CCHC-type 2; atypical zinc-finger motif lies at 184–207 (YRCDCGTLFSRRDSFITHRAFCDA). Residues 194–206 (RRDSFITHRAFCD) form an SHR-binding region. Disordered stretches follow at residues 443 to 467 (KAAQ…NNAS) and 537 to 602 (KSMS…HASF). Composition is skewed to low complexity over residues 448-467 (GSTS…NNAS), 546-560 (QQQQ…QQQQ), and 570-579 (SSSDSADRSS).

In terms of assembly, binds to RGA and SCL3 competitively. As to expression, highly expressed in leaf tissues.

Its subcellular location is the plastid. It is found in the chloroplast. Functionally, transcription factor acting as a positive regulator of the starch synthase SS4. Controls chloroplast development and starch granule formation. Binds DNA via its zinc fingers. Recognizes and binds to SCL3 promoter sequence 5'-AGACAA-3' to promote its expression when in complex with RGA. This Arabidopsis thaliana (Mouse-ear cress) protein is Protein indeterminate-domain 5, chloroplastic.